The chain runs to 338 residues: tRNA N6-adenosine threonylcarbamoyltransferase (338 aa).

Positions 111 and 115 each coordinate Fe cation. Residues 134-138, aspartate 167, glycine 180, and asparagine 272 contribute to the substrate site; that span reads LVSGG. Residue aspartate 300 coordinates Fe cation.

It belongs to the KAE1 / TsaD family. Fe(2+) is required as a cofactor.

The protein resides in the cytoplasm. It carries out the reaction L-threonylcarbamoyladenylate + adenosine(37) in tRNA = N(6)-L-threonylcarbamoyladenosine(37) in tRNA + AMP + H(+). In terms of biological role, required for the formation of a threonylcarbamoyl group on adenosine at position 37 (t(6)A37) in tRNAs that read codons beginning with adenine. Is involved in the transfer of the threonylcarbamoyl moiety of threonylcarbamoyl-AMP (TC-AMP) to the N6 group of A37, together with TsaE and TsaB. TsaD likely plays a direct catalytic role in this reaction. The chain is tRNA N6-adenosine threonylcarbamoyltransferase from Nitrosomonas eutropha (strain DSM 101675 / C91 / Nm57).